The chain runs to 190 residues: Ribose 1,5-bisphosphate phosphokinase PhnN (190 aa).

An ATP-binding site is contributed by Gly-10–Asp-17.

It belongs to the ribose 1,5-bisphosphokinase family.

It carries out the reaction alpha-D-ribose 1,5-bisphosphate + ATP = 5-phospho-alpha-D-ribose 1-diphosphate + ADP. It participates in metabolic intermediate biosynthesis; 5-phospho-alpha-D-ribose 1-diphosphate biosynthesis; 5-phospho-alpha-D-ribose 1-diphosphate from D-ribose 5-phosphate (route II): step 3/3. Catalyzes the phosphorylation of ribose 1,5-bisphosphate to 5-phospho-D-ribosyl alpha-1-diphosphate (PRPP). This is Ribose 1,5-bisphosphate phosphokinase PhnN from Pseudomonas fluorescens (strain SBW25).